We begin with the raw amino-acid sequence, 710 residues long: E3 ubiquitin-protein ligase TRIM9 (710 aa).

The segment at 10–50 adopts an RING-type zinc-finger fold; it reads CPVCGSFYREPIILPCSHNICQACARNILVQTPESESPQSR. Phosphothreonine is present on Thr41. 4 positions are modified to phosphoserine: Ser44, Ser46, Ser49, and Ser53. B box-type zinc fingers lie at residues 163–212 and 224–266; these read AAAL…LVPP and RKVS…VKAL. Residues Cys168, Cys171, Cys193, His198, Cys229, His232, Cys252, and His258 each coordinate Zn(2+). Residues 273-340 are a coiled coil; sequence HKSQLSQALN…KAQLLARVNK (68 aa). The 59-residue stretch at 374-432 folds into the COS domain; that stretch reads IKENDPSGFLQISDALIRRVHLTEDQWGKGTLTPRMTTDFDLSLDNSPLLQSIHQLDFV. Residues 440-535 enclose the Fibronectin type-III domain; the sequence is VPATPILQLE…KTLVLQTSEV (96 aa). Residues 533–702 form the B30.2/SPRY domain; it reads SEVAWFAFDP…LHTGLQVPDF (170 aa).

This sequence belongs to the TRIM/RBCC family. As to quaternary structure, interacts with SNAP25. Auto-ubiquitinated.

The protein resides in the cytoplasm. Its subcellular location is the cell projection. The protein localises to the dendrite. It localises to the cytoplasmic vesicle. It is found in the secretory vesicle. The protein resides in the synaptic vesicle. Its subcellular location is the synapse. The protein localises to the cytoskeleton. It catalyses the reaction S-ubiquitinyl-[E2 ubiquitin-conjugating enzyme]-L-cysteine + [acceptor protein]-L-lysine = [E2 ubiquitin-conjugating enzyme]-L-cysteine + N(6)-ubiquitinyl-[acceptor protein]-L-lysine.. It functions in the pathway protein modification; protein ubiquitination. In terms of biological role, E3 ubiquitin-protein ligase which ubiquitinates itself in cooperation with an E2 enzyme UBE2D2/UBC4 and serves as a targeting signal for proteasomal degradation. May play a role in regulation of neuronal functions. May act as a regulator of synaptic vesicle exocytosis by controlling the availability of SNAP25 for the SNARE complex formation. This Bos taurus (Bovine) protein is E3 ubiquitin-protein ligase TRIM9 (TRIM9).